The following is an 82-amino-acid chain: Endocuticle structural glycoprotein ABD-5 (82 aa).

Pyrrolidone carboxylic acid is present on glutamine 1. Residues 18-82 enclose the Chitin-binding type R&amp;R domain; it reads LGQYNFAYRT…ENGYQPRVQS (65 aa).

Functionally, component of the soft endocuticle of migratory locust. The protein is Endocuticle structural glycoprotein ABD-5 of Locusta migratoria (Migratory locust).